Here is a 246-residue protein sequence, read N- to C-terminus: tRNA pseudouridine synthase A (246 aa).

The Nucleophile role is filled by D52. Y111 is a binding site for substrate.

Belongs to the tRNA pseudouridine synthase TruA family. As to quaternary structure, homodimer.

The enzyme catalyses uridine(38/39/40) in tRNA = pseudouridine(38/39/40) in tRNA. Formation of pseudouridine at positions 38, 39 and 40 in the anticodon stem and loop of transfer RNAs. This chain is tRNA pseudouridine synthase A, found in Ehrlichia ruminantium (strain Welgevonden).